Reading from the N-terminus, the 576-residue chain is Immunoglobulin mu heavy chain (576 aa).

At glutamine 1 the chain carries Pyrrolidone carboxylic acid. 5 Ig-like domains span residues glutamine 1–cysteine 97, proline 132–cysteine 212, proline 236–serine 334, proline 352–serine 442, and proline 452–aspartate 553. Residues glutamine 1–valine 124 form a variable (V) domain, involved in antigen recognition region. Disulfide bonds link cysteine 22-cysteine 97, cysteine 153-cysteine 212, and cysteine 259-cysteine 320. Asparagine 74 and asparagine 170 each carry an N-linked (GlcNAc...) asparagine glycan. The constant (C) domain stretch occupies residues serine 125–tyrosine 576. N-linked (GlcNAc...) asparagine glycosylation is found at asparagine 332, asparagine 395, and asparagine 402. 2 disulfide bridges follow: cysteine 367–cysteine 426 and cysteine 474–cysteine 536. Asparagine 563 is a glycosylation site (N-linked (GlcNAc...) asparagine).

In terms of assembly, immunoglobulins are composed of two identical heavy chains and two identical light chains; disulfide-linked. It is found almost exclusively as a homopentamer in the serum. Membrane-bound IgM molecules are non-covalently associated with heterodimer of CD79A and CD79B.

The protein resides in the secreted. Its subcellular location is the cell membrane. Functionally, immunoglobulins, also known as antibodies, are membrane-bound or secreted glycoproteins produced by B lymphocytes. In the recognition phase of humoral immunity, the membrane-bound immunoglobulins serve as receptors which, upon binding of a specific antigen, trigger the clonal expansion and differentiation of B lymphocytes into immunoglobulins-secreting plasma cells. Secreted immunoglobulins mediate the effector phase of humoral immunity, which results in the elimination of bound antigens. The antigen binding site is formed by the variable domain of one heavy chain, together with that of its associated light chain. Thus, each immunoglobulin has two antigen binding sites with remarkable affinity for a particular antigen. The variable domains are assembled by a process called V-(D)-J rearrangement and can then be subjected to somatic hypermutations which, after exposure to antigen and selection, allow affinity maturation for a particular antigen. IgM antibodies play an important role in primary defense mechanisms. They have been shown to be involved in early recognition of external invaders like bacteria and viruses, cellular waste and modified self, as well as in recognition and elimination of precancerous and cancerous lesions. The membrane-bound form is found in the majority of normal B cells alongside with IgD. Membrane-bound IgM induces the phosphorylation of CD79A and CD79B by the Src family of protein tyrosine kinases. It may cause death of cells by apoptosis. It is also found in soluble form, which represents about 30% of the total serum immunoglobulins where it is found almost exclusively as a homopentamer. After the antigen binds to the B cell receptor, the secreted form is secreted in large amounts (, PubMed:16895553). The sequence is that of Immunoglobulin mu heavy chain from Homo sapiens (Human).